A 207-amino-acid polypeptide reads, in one-letter code: Homeobox protein BarH-like 1 (207 aa).

The homeobox DNA-binding region spans 95–154 (GRRSRTVFTELQLMGLEKRFEKQKYLSTPDRIDLAESLGLSQLQVKTWYQNRRMKWKKIV). Residues 157-207 (GGGLESPTKPKGRPKKNSIPSSEQLSEQERAKETEKPPESPGEPSERQQEE) form a disordered region. The span at 183 to 207 (EQERAKETEKPPESPGEPSERQQEE) shows a compositional bias: basic and acidic residues.

It belongs to the BAR homeobox family. As to expression, expressed predominantly in the facial primordia, developing stomach, and proximal limbs.

The protein resides in the nucleus. Functionally, transcription factor, which is involved in craniofacial development, in odontogenic region definition, and in stomach organogenesis. Binds to a regulatory module of the NCAM promoter. The polypeptide is Homeobox protein BarH-like 1 (BARX1) (Gallus gallus (Chicken)).